We begin with the raw amino-acid sequence, 246 residues long: MAEEGERKKIPLVPENLLKKRKAYQALKATQAKQALLAKRERKGKQFRFRRLESFVHDSWRQQRDKVRVQRLEVKPRALEVPDKHPLAFVIRMERIEGVSLLVKSTIMKLGLKKLFSGVFVKVTPQSVRMLRTVEPYVTWGFPNLKSVRELILKRGQAKINNKTVPLTDNTVIEEHLGRFGVICLEDLIHEIAFPGKHFQEVSSFLCPFLLSVARHATRNRVGFRKEMGSPGYRGDRINQLIRQLN.

A Phosphoserine modification is found at Ser-54.

It belongs to the universal ribosomal protein uL30 family.

This chain is Large ribosomal subunit protein uL30-like 1 (Rpl7l1), found in Mus musculus (Mouse).